Consider the following 508-residue polypeptide: Kinesin light chain 3 (508 aa).

The tract at residues 1–20 is disordered; the sequence is MSVQVAAPGSTGLGPERLNP. A coiled-coil region spans residues 88–150; the sequence is LLALSAHVSV…EEEKSHLQFL (63 aa). The interval 154-197 is disordered; that stretch reads RQYDPPEESQRPESPPRRDSLASLFPSEEEEKKGPEAAGAAAAQ. The segment covering 161–173 has biased composition (basic and acidic residues); that stretch reads ESQRPESPPRRDS. At Ser-173 the chain carries Phosphoserine. TPR repeat units follow at residues 207–240, 249–282, 291–324, 333–366, and 375–408; these read LRTLHNLVIQYAGQGRYEVAVPLCRQALEDLERS, ATMLNILALVYRDQNKYKEATELLHDALQIREQT, AATLNNLAVLYGKRGRYREAEPLCQRALEIREKV, AKQLNNLALLCQNQGKFQDVERHYARALSIYEAL, and AKTKNNLASAYLKQNKYQQAEELYKEILSQEALP. The tract at residues 409-441 is disordered; that stretch reads APLGAPQGGTAGDTQQQVLRRSSSFSKLRESIR. Residues 420-434 are compositionally biased toward polar residues; the sequence is GDTQQQVLRRSSSFS. Ser-467 bears the Phosphoserine mark. Residues 486–508 are disordered; sequence LSTRHLSEAPRTLSISTQDLSPR. Polar residues predominate over residues 498-508; it reads LSISTQDLSPR. Thr-502 carries the post-translational modification Phosphothreonine. At Ser-506 the chain carries Phosphoserine.

It belongs to the kinesin light chain family. In terms of assembly, oligomer composed of two heavy chains and two light chains. Associates with microtubulin in an ATP-dependent manner. Interacts with KIF5C. Interacts with ODF1. Interacts with LRGUK. Interacts with VDAC2. Expressed in postmeiotic male germ cells (at protein level). Expressed in the testes (at protein level). Expressed in spleen, intestine, brain and ovary.

The protein localises to the cytoplasm. It localises to the cytoskeleton. Its subcellular location is the mitochondrion. Functionally, kinesin is a microtubule-associated force-producing protein that may play a role in organelle transport. Plays a role during spermiogenesis in the development of the sperm tail midpiece and in the normal function of spermatozoa. May play a role in the formation of the mitochondrial sheath formation in the developing spermatid midpiece. This chain is Kinesin light chain 3 (Klc3), found in Mus musculus (Mouse).